An 876-amino-acid chain; its full sequence is Valine--tRNA ligase (876 aa).

A 'HIGH' region motif is present at residues 43 to 53 (PNVTGVLHMGH). A 'KMSKS' region motif is present at residues 534 to 538 (KMSKS). Lys-537 contributes to the ATP binding site. A coiled-coil region spans residues 847–876 (PEKVVAIEKAKKADAEAKIEALKASLKSLS).

The protein belongs to the class-I aminoacyl-tRNA synthetase family. ValS type 1 subfamily. In terms of assembly, monomer.

The protein localises to the cytoplasm. The enzyme catalyses tRNA(Val) + L-valine + ATP = L-valyl-tRNA(Val) + AMP + diphosphate. Its function is as follows. Catalyzes the attachment of valine to tRNA(Val). As ValRS can inadvertently accommodate and process structurally similar amino acids such as threonine, to avoid such errors, it has a 'posttransfer' editing activity that hydrolyzes mischarged Thr-tRNA(Val) in a tRNA-dependent manner. The sequence is that of Valine--tRNA ligase from Christiangramia forsetii (strain DSM 17595 / CGMCC 1.15422 / KT0803) (Gramella forsetii).